The chain runs to 141 residues: Nucleoside triphosphatase NudI (141 aa).

Positions 1–141 (MRQRTIVCPL…RKTLRLKGLL (141 aa)) constitute a Nudix hydrolase domain. Residues 38–59 (GGVEPGERIEEALRREIREELG) carry the Nudix box motif.

This sequence belongs to the Nudix hydrolase family. NudI subfamily. Monomer. Mg(2+) serves as cofactor.

The catalysed reaction is a ribonucleoside 5'-triphosphate + H2O = a ribonucleoside 5'-phosphate + diphosphate + H(+). It catalyses the reaction a 2'-deoxyribonucleoside 5'-triphosphate + H2O = a 2'-deoxyribonucleoside 5'-phosphate + diphosphate + H(+). It carries out the reaction dUTP + H2O = dUMP + diphosphate + H(+). The enzyme catalyses dTTP + H2O = dTMP + diphosphate + H(+). The catalysed reaction is dCTP + H2O = dCMP + diphosphate + H(+). Its function is as follows. Catalyzes the hydrolysis of nucleoside triphosphates, with a preference for pyrimidine deoxynucleoside triphosphates (dUTP, dTTP and dCTP). The protein is Nucleoside triphosphatase NudI of Escherichia coli (strain ATCC 8739 / DSM 1576 / NBRC 3972 / NCIMB 8545 / WDCM 00012 / Crooks).